The chain runs to 1015 residues: Putative helicase mov-10-B.2 (1015 aa).

The tract at residues 94-130 (QWFRPRRRQQNQANATPGNVSSVTPSSDQGPSCPESG) is disordered. Over residues 109–123 (TPGNVSSVTPSSDQG) the composition is skewed to polar residues. 555-562 (GPPGTGKT) contributes to the ATP binding site. Positions 677–680 (DEAG) match the DEAG box motif.

The protein belongs to the DNA2/NAM7 helicase family. SDE3 subfamily.

It localises to the cytoplasm. It is found in the P-body. The enzyme catalyses ATP + H2O = ADP + phosphate + H(+). Probable RNA helicase. Required for RNA-mediated gene silencing by the RNA-induced silencing complex (RISC). Required for both miRNA-mediated translational repression and miRNA-mediated cleavage of complementary mRNAs by RISC. This Danio rerio (Zebrafish) protein is Putative helicase mov-10-B.2 (mov10b.2).